Reading from the N-terminus, the 126-residue chain is Acidic phospholipase A2 3 (126 aa).

Residues 1-7 (SNRPMPL) constitute a propeptide that is removed on maturation. 7 cysteine pairs are disulfide-bonded: cysteine 18/cysteine 78, cysteine 33/cysteine 125, cysteine 35/cysteine 51, cysteine 50/cysteine 106, cysteine 57/cysteine 99, cysteine 67/cysteine 92, and cysteine 85/cysteine 97. Ca(2+) is bound by residues tyrosine 34, glycine 36, and glycine 38. Histidine 54 is a catalytic residue. Aspartate 55 lines the Ca(2+) pocket. Aspartate 100 is a catalytic residue.

The protein belongs to the phospholipase A2 family. Group I subfamily. D49 sub-subfamily. The cofactor is Ca(2+). Expressed by the venom gland.

Its subcellular location is the secreted. The catalysed reaction is a 1,2-diacyl-sn-glycero-3-phosphocholine + H2O = a 1-acyl-sn-glycero-3-phosphocholine + a fatty acid + H(+). In terms of biological role, PLA2 catalyzes the calcium-dependent hydrolysis of the 2-acyl groups in 3-sn-phosphoglycerides. This chain is Acidic phospholipase A2 3, found in Naja sagittifera (Andaman cobra).